Here is a 128-residue protein sequence, read N- to C-terminus: Large ribosomal subunit protein bL20 (128 aa).

The protein belongs to the bacterial ribosomal protein bL20 family.

Functionally, binds directly to 23S ribosomal RNA and is necessary for the in vitro assembly process of the 50S ribosomal subunit. It is not involved in the protein synthesizing functions of that subunit. This chain is Large ribosomal subunit protein bL20, found in Corynebacterium efficiens (strain DSM 44549 / YS-314 / AJ 12310 / JCM 11189 / NBRC 100395).